Reading from the N-terminus, the 365-residue chain is DNA polymerase IV 1 (365 aa).

One can recognise a UmuC domain in the interval 6 to 196 (VLHIDMDYFF…LNVSKLWGIG (191 aa)). Mg(2+) is bound by residues Asp10 and Asp113. Residue Glu114 is part of the active site.

It belongs to the DNA polymerase type-Y family. Monomer. The cofactor is Mg(2+).

It is found in the cytoplasm. It carries out the reaction DNA(n) + a 2'-deoxyribonucleoside 5'-triphosphate = DNA(n+1) + diphosphate. Poorly processive, error-prone DNA polymerase involved in untargeted mutagenesis. Copies undamaged DNA at stalled replication forks, which arise in vivo from mismatched or misaligned primer ends. These misaligned primers can be extended by PolIV. Exhibits no 3'-5' exonuclease (proofreading) activity. May be involved in translesional synthesis. This Methanosarcina mazei (strain ATCC BAA-159 / DSM 3647 / Goe1 / Go1 / JCM 11833 / OCM 88) (Methanosarcina frisia) protein is DNA polymerase IV 1 (dbh1).